The sequence spans 303 residues: Elongation factor Ts (303 aa).

The involved in Mg(2+) ion dislocation from EF-Tu stretch occupies residues 79–82 (TDFT).

The protein belongs to the EF-Ts family.

The protein resides in the cytoplasm. In terms of biological role, associates with the EF-Tu.GDP complex and induces the exchange of GDP to GTP. It remains bound to the aminoacyl-tRNA.EF-Tu.GTP complex up to the GTP hydrolysis stage on the ribosome. The polypeptide is Elongation factor Ts (Magnetococcus marinus (strain ATCC BAA-1437 / JCM 17883 / MC-1)).